A 230-amino-acid chain; its full sequence is Triosephosphate isomerase (230 aa).

9–11 is a substrate binding site; the sequence is NYK. The active-site Electrophile is the H93. E141 serves as the catalytic Proton acceptor. Residues I146, G180, and 201 to 202 contribute to the substrate site; that span reads AS.

The protein belongs to the triosephosphate isomerase family. Homotetramer; dimer of dimers.

The protein resides in the cytoplasm. The catalysed reaction is D-glyceraldehyde 3-phosphate = dihydroxyacetone phosphate. It participates in carbohydrate biosynthesis; gluconeogenesis. Its pathway is carbohydrate degradation; glycolysis; D-glyceraldehyde 3-phosphate from glycerone phosphate: step 1/1. Functionally, involved in the gluconeogenesis. Catalyzes stereospecifically the conversion of dihydroxyacetone phosphate (DHAP) to D-glyceraldehyde-3-phosphate (G3P). The sequence is that of Triosephosphate isomerase from Sulfolobus acidocaldarius (strain ATCC 33909 / DSM 639 / JCM 8929 / NBRC 15157 / NCIMB 11770).